Consider the following 309-residue polypeptide: Porphobilinogen deaminase (309 aa).

Residue Cys-244 is modified to S-(dipyrrolylmethanemethyl)cysteine.

The protein belongs to the HMBS family. Monomer. It depends on dipyrromethane as a cofactor.

It catalyses the reaction 4 porphobilinogen + H2O = hydroxymethylbilane + 4 NH4(+). Its pathway is porphyrin-containing compound metabolism; protoporphyrin-IX biosynthesis; coproporphyrinogen-III from 5-aminolevulinate: step 2/4. Tetrapolymerization of the monopyrrole PBG into the hydroxymethylbilane pre-uroporphyrinogen in several discrete steps. The sequence is that of Porphobilinogen deaminase from Listeria monocytogenes serotype 4b (strain CLIP80459).